A 362-amino-acid chain; its full sequence is Small ribosomal subunit protein uS4m (362 aa).

Residues 105 to 179 (TRFDVILLRL…FYKEILVEKI (75 aa)) enclose the S4 RNA-binding domain.

It belongs to the universal ribosomal protein uS4 family. Component of the mitochondrial ribosome small subunit.

The protein resides in the mitochondrion. This Arabidopsis thaliana (Mouse-ear cress) protein is Small ribosomal subunit protein uS4m (RPS4).